Reading from the N-terminus, the 174-residue chain is MDPIDITYNDEVGFLDDEKRDWKTWIMKLLLLAKKEIGKDNNLEMSINFVNEDRSHEINLKYRDKDRPTDVISFAIEDGEDSIDLAAFKDDPDFQEDIGDLFMCPSVISRHSKEYGTGFDREFGYTIVHGFLHLNGYDHIEPDEAKEMFGIQGKVLEDYGLPLYPDQLDEGRGK.

Positions 129, 133, and 139 each coordinate Zn(2+).

It belongs to the endoribonuclease YbeY family. It depends on Zn(2+) as a cofactor.

The protein localises to the cytoplasm. In terms of biological role, single strand-specific metallo-endoribonuclease involved in late-stage 70S ribosome quality control and in maturation of the 3' terminus of the 16S rRNA. This is Endoribonuclease YbeY from Lactobacillus acidophilus (strain ATCC 700396 / NCK56 / N2 / NCFM).